We begin with the raw amino-acid sequence, 252 residues long: Phosphate import ATP-binding protein PstB (252 aa).

One can recognise an ABC transporter domain in the interval 5–247 (LIASDVNIFY…PRDERTEAYV (243 aa)). Position 37-44 (37-44 (GPSGCGKT)) interacts with ATP.

Belongs to the ABC transporter superfamily. Phosphate importer (TC 3.A.1.7) family. The complex is composed of two ATP-binding proteins (PstB), two transmembrane proteins (PstC and PstA) and a solute-binding protein (PstS).

It is found in the cell membrane. It carries out the reaction phosphate(out) + ATP + H2O = ADP + 2 phosphate(in) + H(+). Functionally, part of the ABC transporter complex PstSACB involved in phosphate import. Responsible for energy coupling to the transport system. This chain is Phosphate import ATP-binding protein PstB, found in Deinococcus geothermalis (strain DSM 11300 / CIP 105573 / AG-3a).